A 416-amino-acid polypeptide reads, in one-letter code: Histidine--tRNA ligase (416 aa).

It belongs to the class-II aminoacyl-tRNA synthetase family. As to quaternary structure, homodimer.

Its subcellular location is the cytoplasm. The enzyme catalyses tRNA(His) + L-histidine + ATP = L-histidyl-tRNA(His) + AMP + diphosphate + H(+). In Dictyoglomus thermophilum (strain ATCC 35947 / DSM 3960 / H-6-12), this protein is Histidine--tRNA ligase.